The sequence spans 283 residues: S-adenosylmethionine mitochondrial carrier protein homolog (283 aa).

Solcar repeat units follow at residues 11-84, 93-178, and 187-275; these read LKFF…GKQF, DSPY…FKLQ, and STPF…TTRI. The next 6 helical transmembrane spans lie at 14–34, 55–75, 99–119, 152–172, 190–210, and 248–268; these read FHAL…LFPI, GIYK…ALFF, MAAA…VEIA, RGFG…FPLW, FSVA…TTPL, and FAGF…FFGF.

It belongs to the mitochondrial carrier (TC 2.A.29) family.

It localises to the mitochondrion inner membrane. Functionally, mitochondrial solute carriers shuttle metabolites, nucleotides, and cofactors through the mitochondrial inner membrane. May mediate the transport of S-adenosylmethionine (SAM) into the mitochondria. In Drosophila melanogaster (Fruit fly), this protein is S-adenosylmethionine mitochondrial carrier protein homolog.